The following is a 367-amino-acid chain: Chorismate synthase (367 aa).

NADP(+)-binding residues include Arg-48 and Arg-54. FMN contacts are provided by residues 125 to 127 (RSS), 238 to 239 (NA), Gly-278, 293 to 297 (KPTSS), and Arg-319.

Belongs to the chorismate synthase family. As to quaternary structure, homotetramer. FMNH2 is required as a cofactor.

It carries out the reaction 5-O-(1-carboxyvinyl)-3-phosphoshikimate = chorismate + phosphate. Its pathway is metabolic intermediate biosynthesis; chorismate biosynthesis; chorismate from D-erythrose 4-phosphate and phosphoenolpyruvate: step 7/7. In terms of biological role, catalyzes the anti-1,4-elimination of the C-3 phosphate and the C-6 proR hydrogen from 5-enolpyruvylshikimate-3-phosphate (EPSP) to yield chorismate, which is the branch point compound that serves as the starting substrate for the three terminal pathways of aromatic amino acid biosynthesis. This reaction introduces a second double bond into the aromatic ring system. The polypeptide is Chorismate synthase (Xanthomonas campestris pv. campestris (strain 8004)).